A 328-amino-acid polypeptide reads, in one-letter code: 3-dehydroquinate synthase (328 aa).

The protein belongs to the archaeal-type DHQ synthase family.

It catalyses the reaction 2-amino-2,3,7-trideoxy-D-lyxo-hept-6-ulosonate + NAD(+) + H2O = 3-dehydroquinate + NH4(+) + NADH + H(+). In terms of biological role, catalyzes the oxidative deamination and cyclization of 2-amino-3,7-dideoxy-D-threo-hept-6-ulosonic acid (ADH) to yield 3-dehydroquinate (DHQ), which is fed into the canonical shikimic pathway of aromatic amino acid biosynthesis. This Methanospirillum hungatei JF-1 (strain ATCC 27890 / DSM 864 / NBRC 100397 / JF-1) protein is 3-dehydroquinate synthase.